Consider the following 62-residue polypeptide: Large ribosomal subunit protein bL28 (62 aa).

The protein belongs to the bacterial ribosomal protein bL28 family.

The polypeptide is Large ribosomal subunit protein bL28 (Onion yellows phytoplasma (strain OY-M)).